We begin with the raw amino-acid sequence, 706 residues long: MIQKMSPSLRRPSTRSSSGSSNIPQSPSVRSTSSFSNLTRNSIRSTSNSGSQSISASSTRSNSPLRSVSAKSDPFLHPGRIRIRRSDSINNNSRKNDTYTGSITVTIRPKPRSVGTSRDHVGLKSPRYSQPRSNSHHGSNTFVRDPWFITNDKTIVHEEIGEFKFDHVFASHCTNLEVYERTSKPMIDKLLMGFNATIFAYGMTGSGKTFTMSGNEQELGLIPLSVSYLFTNIMEQSMNGDKKFDVIISYLEIYNERIYDLLESGLEESGSRISTPSRLYMSKSNSNGLGVELKIRDDSQYGVKVIGLTERRCESSEELLRWIAVGDKSRKIGETDYNARSSRSHAIVLIRLTSTNVKNGTSRSSTLSLCDLAGSERATGQQERRKEGSFINKSLLALGTVISKLSADKMNSVGSNIPSPSASGSSSSSGNATNNGTSPSNHIPYRDSKLTRLLQPALSGDSIVTTICTVDTRNDAAAETMNTLRFASRAKNVALHVSKKSIISNGNNDGDKDRTIELLRRQLEEQRRMISELKNRSNIGEPLTKSSNESTYKDIKATGNDGDPNLALMRAENRVLKYKLENCEKLLDKDVVDLQDSEIMEIVEMLPFEVGTLLETKFQGLESQIRQYRKYTQKLEDKIMALEKSGHTAMSLTGCDGTEVIELQKMLERKDKMIEALQSAKRLRDRALKPLINTQQSPHPVVDNDK.

Composition is skewed to low complexity over residues 1-28 and 36-63; these read MIQK…QSPS and SNLT…RSNS. The segment at 1-139 is disordered; sequence MIQKMSPSLR…QPRSNSHHGS (139 aa). Residues 102–493 enclose the Kinesin motor domain; that stretch reads SITVTIRPKP…LRFASRAKNV (392 aa). Polar residues predominate over residues 127–139; that stretch reads RYSQPRSNSHHGS. Position 202 to 209 (202 to 209) interacts with ATP; that stretch reads GMTGSGKT. A disordered region spans residues 413–445; sequence VGSNIPSPSASGSSSSSGNATNNGTSPSNHIPY. Residues 414–441 are compositionally biased toward low complexity; sequence GSNIPSPSASGSSSSSGNATNNGTSPSN. Coiled coils occupy residues 507 to 541, 569 to 589, and 612 to 689; these read NNDG…NIGE, MRAE…LLDK, and TLLE…RALK.

This sequence belongs to the TRAFAC class myosin-kinesin ATPase superfamily. Kinesin family. As to quaternary structure, might be dimeric.

The protein resides in the cytoplasm. The protein localises to the cytoskeleton. Its function is as follows. Required for assembly of the mitotic spindle. This is Kinesin-like protein KIP2 (KIP2) from Saccharomyces cerevisiae (strain ATCC 204508 / S288c) (Baker's yeast).